A 533-amino-acid chain; its full sequence is Dipeptide-binding protein (533 aa).

An N-terminal signal peptide occupies residues 1-24 (MRKILPLRAWLAAGLILGSPFSHA).

It belongs to the bacterial solute-binding protein 5 family.

It is found in the periplasm. In terms of biological role, binds different dipeptides. Probably bind only L-amino acid containing dipeptides. This is Dipeptide-binding protein from Pseudomonas aeruginosa (strain ATCC 15692 / DSM 22644 / CIP 104116 / JCM 14847 / LMG 12228 / 1C / PRS 101 / PAO1).